A 431-amino-acid chain; its full sequence is uncharacterized protein (431 aa).

4Fe-4S ferredoxin-type domains follow at residues 336 to 367 (VRPV…NGLD) and 362 to 391 (IDNG…MDTG).

This is an uncharacterized protein from Methanothermobacter thermautotrophicus (strain ATCC 29096 / DSM 1053 / JCM 10044 / NBRC 100330 / Delta H) (Methanobacterium thermoautotrophicum).